The chain runs to 757 residues: Primary amine oxidase (757 aa).

The N-terminal stretch at 1 to 30 (MGSPSLYSARKTTLALAVALSFAWQAPVFA) is a signal peptide. Substrate contacts are provided by residues 411–422 (YLDSGDYGMGTL) and 493–498 (VGNYDY). Asp413 functions as the Proton acceptor in the catalytic mechanism. Residue Tyr496 is the Schiff-base intermediate with substrate; via topaquinone of the active site. At Tyr496 the chain carries 2',4',5'-topaquinone. 2 residues coordinate Cu cation: His554 and His556. Ca(2+) is bound by residues Asp563, Leu564, Asp565, Glu603, Tyr697, Asp700, Glu702, Asp708, and Ala709. A Mn(2+)-binding site is contributed by Asp563. Asp565 lines the Mn(2+) pocket. The interval 680 to 701 (PEGKYPNRSTHDTGLGQYSKDN) is disordered. Asp708 contributes to the Mn(2+) binding site. His719 lines the Cu cation pocket.

This sequence belongs to the copper/topaquinone oxidase family. Homodimer. It depends on Cu cation as a cofactor. Requires Zn(2+) as cofactor. Ca(2+) serves as cofactor. L-topaquinone is required as a cofactor. The cofactor is Mn(2+). Topaquinone (TPQ) is generated by copper-dependent autoxidation of a specific tyrosyl residue.

It localises to the periplasm. It catalyses the reaction a primary methyl amine + O2 + H2O = an aldehyde + H2O2 + NH4(+). The catalysed reaction is 2-phenylethylamine + O2 + H2O = 2-phenylacetaldehyde + H2O2 + NH4(+). It functions in the pathway amino-acid degradation; L-phenylalanine degradation; phenylacetate from L-phenylalanine: step 2/3. Inhibited by 2-hydrazinopyridine. Functionally, the enzyme prefers aromatic over aliphatic amines. The sequence is that of Primary amine oxidase (tynA) from Escherichia coli (strain K12).